Reading from the N-terminus, the 386-residue chain is L-lactate dehydrogenase (386 aa).

The FMN hydroxy acid dehydrogenase domain occupies 1-380 (MIISAASDYR…SGDALSRVTR (380 aa)). Tyrosine 24 is a substrate binding site. FMN-binding residues include serine 106 and glutamine 127. Tyrosine 129 serves as a coordination point for substrate. Threonine 155 is an FMN binding site. Position 164 (arginine 164) interacts with substrate. Lysine 251 is a binding site for FMN. The active-site Proton acceptor is histidine 275. Arginine 278 contributes to the substrate binding site. Residue 306 to 330 (DSGIRSGLDVVRMLALGADAVLLGR) coordinates FMN.

It belongs to the FMN-dependent alpha-hydroxy acid dehydrogenase family. Requires FMN as cofactor.

It localises to the cell inner membrane. It carries out the reaction (S)-lactate + A = pyruvate + AH2. Functionally, catalyzes the conversion of L-lactate to pyruvate. Is coupled to the respiratory chain. The sequence is that of L-lactate dehydrogenase from Xanthomonas campestris pv. campestris (strain 8004).